Here is a 227-residue protein sequence, read N- to C-terminus: Probable GTP-binding protein EngB (227 aa).

The EngB-type G domain maps to Lys30–Glu219. GTP is bound by residues Gly38–Ser45, Gly63–Lys67, Asp80–Gly83, Asn160–Asp163, and Ile197–Ile199. Positions 45 and 65 each coordinate Mg(2+).

It belongs to the TRAFAC class TrmE-Era-EngA-EngB-Septin-like GTPase superfamily. EngB GTPase family. Mg(2+) is required as a cofactor.

In terms of biological role, necessary for normal cell division and for the maintenance of normal septation. This chain is Probable GTP-binding protein EngB, found in Methanococcus aeolicus (strain ATCC BAA-1280 / DSM 17508 / OCM 812 / Nankai-3).